The sequence spans 179 residues: Viral interleukin-10 homolog (179 aa).

The N-terminal stretch at 1–18 is a signal peptide; sequence MFRASLLCCLVLLAGVWA. Disulfide bonds link cysteine 30-cysteine 127 and cysteine 80-cysteine 133. N-linked (GlcNAc...) asparagine; by host glycans are attached at residues asparagine 100 and asparagine 135.

This sequence belongs to the IL-10 family.

It localises to the secreted. Functionally, down-regulates the expression of the TAP1 gene (transporter associated with antigen processing), thereby affecting the transport of peptides into the endoplasmic reticulum and subsequent peptide loading by MHC class I molecules. In consequence, infected cells are masked for immune recognition by cytotoxic T-lymphocytes. The polypeptide is Viral interleukin-10 homolog (Equus caballus (Horse)).